An 89-amino-acid polypeptide reads, in one-letter code: Small ribosomal subunit protein uS15 (89 aa).

The segment covering 1–16 has biased composition (basic and acidic residues); that stretch reads MSVADIKKQDIVKDNG. The tract at residues 1–24 is disordered; that stretch reads MSVADIKKQDIVKDNGRSANDTGS.

The protein belongs to the universal ribosomal protein uS15 family. In terms of assembly, part of the 30S ribosomal subunit. Forms a bridge to the 50S subunit in the 70S ribosome, contacting the 23S rRNA.

One of the primary rRNA binding proteins, it binds directly to 16S rRNA where it helps nucleate assembly of the platform of the 30S subunit by binding and bridging several RNA helices of the 16S rRNA. Functionally, forms an intersubunit bridge (bridge B4) with the 23S rRNA of the 50S subunit in the ribosome. In Ralstonia pickettii (strain 12J), this protein is Small ribosomal subunit protein uS15.